The chain runs to 210 residues: Phosphoribosyl-dephospho-CoA transferase (210 aa).

Active-site residues include Asp-135 and Asp-137.

It belongs to the MdcG family.

The catalysed reaction is apo-[malonate decarboxylase ACP] + 2'-(5''-triphospho-alpha-D-ribosyl)-3'-dephospho-CoA = holo-[malonate decarboxylase ACP] + diphosphate. In terms of biological role, transfers 2'-(5-triphosphoribosyl)-3'-dephosphocoenzyme-A to the apo-[acyl-carrier-protein] of the malonate decarboxylase to yield holo-[acyl-carrier-protein]. This is Phosphoribosyl-dephospho-CoA transferase from Pseudomonas aeruginosa (strain ATCC 15692 / DSM 22644 / CIP 104116 / JCM 14847 / LMG 12228 / 1C / PRS 101 / PAO1).